Here is a 128-residue protein sequence, read N- to C-terminus: Glycine cleavage system H protein (128 aa).

Positions 24 to 106 (SVTVGITAHA…YGDGWFFKIK (83 aa)) constitute a Lipoyl-binding domain. The residue at position 65 (lysine 65) is an N6-lipoyllysine.

It belongs to the GcvH family. As to quaternary structure, the glycine cleavage system is composed of four proteins: P, T, L and H. It depends on (R)-lipoate as a cofactor.

The glycine cleavage system catalyzes the degradation of glycine. The H protein shuttles the methylamine group of glycine from the P protein to the T protein. The protein is Glycine cleavage system H protein of Chromobacterium violaceum (strain ATCC 12472 / DSM 30191 / JCM 1249 / CCUG 213 / NBRC 12614 / NCIMB 9131 / NCTC 9757 / MK).